The chain runs to 54 residues: Large ribosomal subunit protein bL33A (54 aa).

The protein belongs to the bacterial ribosomal protein bL33 family.

This chain is Large ribosomal subunit protein bL33A, found in Saccharopolyspora erythraea (strain ATCC 11635 / DSM 40517 / JCM 4748 / NBRC 13426 / NCIMB 8594 / NRRL 2338).